Reading from the N-terminus, the 251-residue chain is Hydroxyacylglutathione hydrolase (251 aa).

The Zn(2+) site is built by His-53, His-55, Asp-57, His-58, His-110, Asp-127, and His-165.

Belongs to the metallo-beta-lactamase superfamily. Glyoxalase II family. As to quaternary structure, monomer. Zn(2+) serves as cofactor.

The enzyme catalyses an S-(2-hydroxyacyl)glutathione + H2O = a 2-hydroxy carboxylate + glutathione + H(+). The protein operates within secondary metabolite metabolism; methylglyoxal degradation; (R)-lactate from methylglyoxal: step 2/2. In terms of biological role, thiolesterase that catalyzes the hydrolysis of S-D-lactoyl-glutathione to form glutathione and D-lactic acid. This is Hydroxyacylglutathione hydrolase from Escherichia coli O9:H4 (strain HS).